A 155-amino-acid polypeptide reads, in one-letter code: Large ribosomal subunit protein uL30 (155 aa).

Belongs to the universal ribosomal protein uL30 family. In terms of assembly, part of the 50S ribosomal subunit.

The chain is Large ribosomal subunit protein uL30 from Pyrococcus furiosus (strain ATCC 43587 / DSM 3638 / JCM 8422 / Vc1).